A 295-amino-acid chain; its full sequence is Probable WRKY transcription factor 46 (295 aa).

The WRKY DNA-binding region spans 98–166 (QENGSIDDGH…YLGNHTCNNI (69 aa)).

The protein belongs to the WRKY group III family. As to quaternary structure, binds to BZR2/BES1 to cooperatively regulate the expression of target genes. In terms of processing, phosphorylated and destabilized by ASK7/BIN2. Expressed in guard cells, hypocotyls, and in the vascular tissues of cotyledon and root. Mostly expressed in roots, at lower levels in leaves and petioles, and, to a lower extent, in stems, flowers and siliques.

Its subcellular location is the nucleus. In terms of biological role, transcription factor involved in the regulation of osmotic stress responses and stomatal movement. Interacts specifically with the W box (5'-(T)TGAC[CT]-3'), a frequently occurring elicitor-responsive cis-acting element. Positive regulator of EDS1-dependent defense against E.amylovora. Together with WRKY70 and WRKY53, promotes resistance to P.syringae, probably by enhancing salicylic acid (SA)- dependent genes. Contributes to the suppression of jasmonic acid (MeJA)-induced expression of PDF1.2. Together with WRKY54 and WRKY70, promotes brassinosteroid (BR)-regulated plant growth but prevent drought response by modulating gene expression. This chain is Probable WRKY transcription factor 46 (WRKY46), found in Arabidopsis thaliana (Mouse-ear cress).